The primary structure comprises 30 residues: Large ribosomal subunit protein bL25 (30 aa).

This sequence belongs to the bacterial ribosomal protein bL25 family. Part of the 50S ribosomal subunit; part of the 5S rRNA/L5/L18/L25 subcomplex. Contacts the 5S rRNA. Binds to the 5S rRNA independently of L5 and L18.

In terms of biological role, this is one of the proteins that binds to the 5S RNA in the ribosome where it forms part of the central protuberance. The chain is Large ribosomal subunit protein bL25 (rplY) from Anabaena variabilis.